Here is a 47-residue protein sequence, read N- to C-terminus: GVSCLCDSDGPSVSGNTLSGIIWLAGCPSGWHNCKAHGPNIGWCCKK.

3 disulfides stabilise this stretch: Cys-4–Cys-44, Cys-6–Cys-34, and Cys-27–Cys-45.

The protein belongs to the sea anemone sodium channel inhibitory toxin family. Type I subfamily.

The protein localises to the secreted. Its subcellular location is the nematocyst. The polypeptide is Delta-actitoxin-Axm1g (Anthopleura xanthogrammica (Giant green sea anemone)).